A 199-amino-acid chain; its full sequence is Holliday junction branch migration complex subunit RuvA (199 aa).

Residues 1 to 64 (MIALLTGRLA…EDSISLFGFR (64 aa)) form a domain I region. Positions 65-143 (TLAEKEFFQL…KMDVAPSAQE (79 aa)) are domain II. The segment at 144-154 (APSSEAPAEVA) is flexible linker. Positions 154–199 (ADDVASALVNLGYKEAVVRKVLAEMSIEPDASTEAVLRQALKVLMK) are domain III.

This sequence belongs to the RuvA family. As to quaternary structure, homotetramer. Forms an RuvA(8)-RuvB(12)-Holliday junction (HJ) complex. HJ DNA is sandwiched between 2 RuvA tetramers; dsDNA enters through RuvA and exits via RuvB. An RuvB hexamer assembles on each DNA strand where it exits the tetramer. Each RuvB hexamer is contacted by two RuvA subunits (via domain III) on 2 adjacent RuvB subunits; this complex drives branch migration. In the full resolvosome a probable DNA-RuvA(4)-RuvB(12)-RuvC(2) complex forms which resolves the HJ.

The protein localises to the cytoplasm. The RuvA-RuvB-RuvC complex processes Holliday junction (HJ) DNA during genetic recombination and DNA repair, while the RuvA-RuvB complex plays an important role in the rescue of blocked DNA replication forks via replication fork reversal (RFR). RuvA specifically binds to HJ cruciform DNA, conferring on it an open structure. The RuvB hexamer acts as an ATP-dependent pump, pulling dsDNA into and through the RuvAB complex. HJ branch migration allows RuvC to scan DNA until it finds its consensus sequence, where it cleaves and resolves the cruciform DNA. This Geobacter sulfurreducens (strain ATCC 51573 / DSM 12127 / PCA) protein is Holliday junction branch migration complex subunit RuvA.